Here is a 204-residue protein sequence, read N- to C-terminus: Oxidoreductase iacF (204 aa).

Belongs to the oxidoreductase OpS7 family.

It participates in secondary metabolite biosynthesis. Functionally, oxidoreductase; part of the gene cluster that mediates the biosynthesis of iso-A82775C, a enylepoxycyclohexane and biosynthetic precursor of the chloropestolide anticancer natural products. Within the cluster, the prenyltransferase iacE prenylates siccayne to generate pestalodiol E, using dimethylallyl diphosphate (DMAPP) as cosubstrate. The probable oxidoreductase iacF is then involved in the epoxidation of pestalodiol F to pestalodiol F, which is further converted to pestalofone A by the short-chain dehydrogenase/reductase iacG. Iso-A82775C is subsequently generated from pestalofone A by the short-chain dehydrogenase/reductase iacC. Iso-A82775C is further condensed with maldoxin via a Diels-Alder reaction to produce the anticancer natural products chloropestolides A to E. The sequence is that of Oxidoreductase iacF from Pestalotiopsis fici (strain W106-1 / CGMCC3.15140).